A 353-amino-acid polypeptide reads, in one-letter code: Photosystem II D2 protein (353 aa).

Threonine 2 carries the post-translational modification N-acetylthreonine. Threonine 2 is subject to Phosphothreonine. A helical membrane pass occupies residues 41–61 (CAYFALGGWFTGTTFVTSWYT). Histidine 118 provides a ligand contact to chlorophyll a. The helical transmembrane segment at 125–141 (GFMLRQFELARSVQLRP) threads the bilayer. Pheophytin a contacts are provided by glutamine 130 and asparagine 143. A helical membrane pass occupies residues 153–166 (VFVSVFLIYPLGQS). Histidine 198 serves as a coordination point for chlorophyll a. Residues 208–228 (AALLCAIHGATVENTLFEDGD) traverse the membrane as a helical segment. Residues histidine 215 and phenylalanine 262 each contribute to the a plastoquinone site. Fe cation is bound at residue histidine 215. Histidine 269 serves as a coordination point for Fe cation. A helical membrane pass occupies residues 279 to 295 (GLWMSAIGVVGLALNLR).

It belongs to the reaction center PufL/M/PsbA/D family. PSII is composed of 1 copy each of membrane proteins PsbA, PsbB, PsbC, PsbD, PsbE, PsbF, PsbH, PsbI, PsbJ, PsbK, PsbL, PsbM, PsbT, PsbX, PsbY, PsbZ, Psb30/Ycf12, at least 3 peripheral proteins of the oxygen-evolving complex and a large number of cofactors. It forms dimeric complexes. The D1/D2 heterodimer binds P680, chlorophylls that are the primary electron donor of PSII, and subsequent electron acceptors. It shares a non-heme iron and each subunit binds pheophytin, quinone, additional chlorophylls, carotenoids and lipids. There is also a Cl(-1) ion associated with D1 and D2, which is required for oxygen evolution. The PSII complex binds additional chlorophylls, carotenoids and specific lipids. serves as cofactor.

Its subcellular location is the plastid. It is found in the chloroplast thylakoid membrane. It catalyses the reaction 2 a plastoquinone + 4 hnu + 2 H2O = 2 a plastoquinol + O2. Its function is as follows. Photosystem II (PSII) is a light-driven water:plastoquinone oxidoreductase that uses light energy to abstract electrons from H(2)O, generating O(2) and a proton gradient subsequently used for ATP formation. It consists of a core antenna complex that captures photons, and an electron transfer chain that converts photonic excitation into a charge separation. The D1/D2 (PsbA/PsbD) reaction center heterodimer binds P680, the primary electron donor of PSII as well as several subsequent electron acceptors. D2 is needed for assembly of a stable PSII complex. This chain is Photosystem II D2 protein, found in Cryptomeria japonica (Japanese cedar).